We begin with the raw amino-acid sequence, 45 residues long: Small polypeptide DEVIL 23 (45 aa).

The segment at 13–44 is required for DVL/RTFL small polypeptide activity; the sequence is KSTLRCWDWCKEQRTRAYIIWRCLIFLLRWDD. The chain crosses the membrane as a helical span at residues 22–39; it reads CKEQRTRAYIIWRCLIFL.

This sequence belongs to the DVL/RTFL small polypeptides family.

It localises to the cell membrane. In terms of biological role, small polypeptide acting as a regulatory molecule which coordinates cellular responses required for differentiation, growth and development, probably by restricting polar cell proliferation in lateral organs and coordinating socket cell recruitment and differentiation at trichome sites. In Arabidopsis thaliana (Mouse-ear cress), this protein is Small polypeptide DEVIL 23.